A 266-amino-acid chain; its full sequence is Ribosomal RNA small subunit methyltransferase A (266 aa).

Asn-10, Ile-12, Gly-37, Glu-58, Asp-82, and Asn-105 together coordinate S-adenosyl-L-methionine.

It belongs to the class I-like SAM-binding methyltransferase superfamily. rRNA adenine N(6)-methyltransferase family. RsmA subfamily.

Its subcellular location is the cytoplasm. The enzyme catalyses adenosine(1518)/adenosine(1519) in 16S rRNA + 4 S-adenosyl-L-methionine = N(6)-dimethyladenosine(1518)/N(6)-dimethyladenosine(1519) in 16S rRNA + 4 S-adenosyl-L-homocysteine + 4 H(+). Its function is as follows. Specifically dimethylates two adjacent adenosines (A1518 and A1519) in the loop of a conserved hairpin near the 3'-end of 16S rRNA in the 30S particle. May play a critical role in biogenesis of 30S subunits. In Mycoplasma mycoides subsp. mycoides SC (strain CCUG 32753 / NCTC 10114 / PG1), this protein is Ribosomal RNA small subunit methyltransferase A.